The chain runs to 427 residues: Gamma-glutamyl phosphate reductase (427 aa).

The protein belongs to the gamma-glutamyl phosphate reductase family.

It localises to the cytoplasm. It carries out the reaction L-glutamate 5-semialdehyde + phosphate + NADP(+) = L-glutamyl 5-phosphate + NADPH + H(+). Its pathway is amino-acid biosynthesis; L-proline biosynthesis; L-glutamate 5-semialdehyde from L-glutamate: step 2/2. Its function is as follows. Catalyzes the NADPH-dependent reduction of L-glutamate 5-phosphate into L-glutamate 5-semialdehyde and phosphate. The product spontaneously undergoes cyclization to form 1-pyrroline-5-carboxylate. The polypeptide is Gamma-glutamyl phosphate reductase (Brucella anthropi (strain ATCC 49188 / DSM 6882 / CCUG 24695 / JCM 21032 / LMG 3331 / NBRC 15819 / NCTC 12168 / Alc 37) (Ochrobactrum anthropi)).